A 522-amino-acid chain; its full sequence is Zinc finger and BTB domain-containing protein 18 (522 aa).

Positions 24 to 91 (CDCTVLVGDA…MYEGKLQFKD (68 aa)) constitute a BTB domain. Basic and acidic residues predominate over residues 121–143 (ATTEADSTKKEEDASSCSDKVES). The disordered stretch occupies residues 121–165 (ATTEADSTKKEEDASSCSDKVESLSDGSSHMAGDLPSDEDEGEDE). At Ser157 the chain carries Phosphoserine. Lys273 participates in a covalent cross-link: Glycyl lysine isopeptide (Lys-Gly) (interchain with G-Cter in SUMO2). Residues 310 to 427 (EPAHLAPLRE…TFSCMYTLKR (118 aa)) form an interaction with DNMT3A region. 4 C2H2-type zinc fingers span residues 370-392 (FMCP…LSTH), 410-432 (PTCS…ERTH), 438-460 (YTCT…AVVH), and 466-489 (HACK…RKFH). Residues Ser516 and Ser517 each carry the phosphoserine modification.

This sequence belongs to the krueppel C2H2-type zinc-finger protein family. ZBTB18 subfamily. As to quaternary structure, interacts with DNMT3A.

It is found in the nucleus. Its function is as follows. Transcriptional repressor that plays a role in various developmental processes such as myogenesis and brain development. Specifically binds the consensus DNA sequence 5'-[AC]ACATCTG[GT][AC]-3' which contains the E box core, and acts by recruiting chromatin remodeling multiprotein complexes. Plays a key role in myogenesis by directly repressing the expression of ID2 and ID3, 2 inhibitors of skeletal myogenesis. Also involved in controlling cell division of progenitor cells and regulating the survival of postmitotic cortical neurons. May also play a role in the organization of chromosomes in the nucleus. This Bos taurus (Bovine) protein is Zinc finger and BTB domain-containing protein 18 (ZBTB18).